A 286-amino-acid chain; its full sequence is Pyridoxal kinase PdxY (286 aa).

Substrate is bound by residues Ser9 and 44-45 (MQ). Positions 111, 147, and 180 each coordinate ATP. Asp221 contacts substrate.

It belongs to the pyridoxine kinase family. PdxY subfamily. Homodimer. Mg(2+) is required as a cofactor.

It catalyses the reaction pyridoxal + ATP = pyridoxal 5'-phosphate + ADP + H(+). It functions in the pathway cofactor metabolism; pyridoxal 5'-phosphate salvage; pyridoxal 5'-phosphate from pyridoxal: step 1/1. In terms of biological role, pyridoxal kinase involved in the salvage pathway of pyridoxal 5'-phosphate (PLP). Catalyzes the phosphorylation of pyridoxal to PLP. This Burkholderia orbicola (strain AU 1054) protein is Pyridoxal kinase PdxY.